Here is a 271-residue protein sequence, read N- to C-terminus: Phosphoglycerate mutase-like protein (271 aa).

His22 serves as the catalytic Tele-phosphohistidine intermediate. Residue Glu134 is the Proton donor/acceptor of the active site. Positions 252-271 are disordered; it reads SAETTNYPGKVPEGLDNPSG.

This sequence belongs to the phosphoglycerate mutase family. In terms of tissue distribution, expressed in the shoot apical meristem and meristematic zone of the root tips.

Its function is as follows. May play a role in carbohydrates metabolism. This is Phosphoglycerate mutase-like protein from Arabidopsis thaliana (Mouse-ear cress).